Reading from the N-terminus, the 349-residue chain is MDENKKRALAAALGQIEKQFGKGAVMRMGDHERQAIPAISTGSLGLDIALGIGGLPKGRIVEIYGPESSGKTTLTLSTIAEAQKQGATCAFVDAEHALDPDYAAKLGVNVDDLLVSQPDTGEQALEITDMLVRSNAVDVIIVDSVAALVPKAEIEGEMGDQHVGLQARLMSQALRKITGNIKNANCLVIFINQIRMKIGVMFGNPETTTGGNALKFYASVRLDIRRTGAVKESDEVIGSETRVKVVKNKVAPPFRQAEFQILYGKGIYRNGEIIDLGVQLGLLEKSGAWYSYQGSKIGQGKANAAKFLEDNPEVAAAVEKSIRDQLLAAPASARPAALADEPADADLDY.

65-72 contributes to the ATP binding site; that stretch reads GPESSGKT.

Belongs to the RecA family.

Its subcellular location is the cytoplasm. Its function is as follows. Can catalyze the hydrolysis of ATP in the presence of single-stranded DNA, the ATP-dependent uptake of single-stranded DNA by duplex DNA, and the ATP-dependent hybridization of homologous single-stranded DNAs. It interacts with LexA causing its activation and leading to its autocatalytic cleavage. The polypeptide is Protein RecA (Azotobacter vinelandii (strain DJ / ATCC BAA-1303)).